The following is a 137-amino-acid chain: MKIALIAHDRKKQDMIQLTTAYKDILKKHELFATGTTGLKITEATGLPVVRFQSGPLGGDQQIGALIAKNDIDLVIFLRDPLTAQPHEPDVSALIRLSDVYAIPLATNMGTAEILIRSVEEGAFEFRNIVHGRDRDA.

The 137-residue stretch at 1–137 (MKIALIAHDR…NIVHGRDRDA (137 aa)) folds into the MGS-like domain. Residues histidine 8, lysine 12, 34–37 (TGTT), and 54–55 (SG) each bind substrate. Residue aspartate 60 is the Proton donor/acceptor of the active site. Histidine 87 is a binding site for substrate.

Belongs to the methylglyoxal synthase family.

It carries out the reaction dihydroxyacetone phosphate = methylglyoxal + phosphate. Its function is as follows. Catalyzes the formation of methylglyoxal from dihydroxyacetone phosphate. This is Methylglyoxal synthase from Bacillus licheniformis (strain ATCC 14580 / DSM 13 / JCM 2505 / CCUG 7422 / NBRC 12200 / NCIMB 9375 / NCTC 10341 / NRRL NRS-1264 / Gibson 46).